Reading from the N-terminus, the 292-residue chain is Insulin-like growth factor-binding protein 3 (292 aa).

Residues 1 to 27 form the signal peptide; the sequence is MHPARPALWAAALTALTLLRGPPVARA. The IGFBP N-terminal domain maps to 36–119; the sequence is PVVRCEPCDA…LNGRGFCANA (84 aa). 6 disulfide bridges follow: C40–C69, C43–C71, C51–C72, C60–C75, C83–C96, and C90–C116. N-linked (GlcNAc...) asparagine glycosylation is found at N118 and N137. Disordered regions lie at residues 128–152 and 178–212; these read YLPSQPAPGNISESEEEHNAGSVES and KGHARDSQRYKVDYESQSTDTQNFSSESKRETEYG. S149 bears the Phosphoserine mark. Basic and acidic residues predominate over residues 178 to 191; sequence KGHARDSQRYKVDY. Polar residues predominate over residues 192–203; it reads ESQSTDTQNFSS. Residue N200 is glycosylated (N-linked (GlcNAc...) asparagine). A Phosphoserine modification is found at S202. The Thyroglobulin type-1 domain occupies 211–286; that stretch reads YGPCRREMED…DTKGKDDVHC (76 aa). 3 disulfide bridges follow: C214/C241, C252/C263, and C265/C286.

Interacts with XLKD1. Binds IGF2 more than IGF1. Forms a ternary complex of about 140 to 150 kDa with IGF1 or IGF2 and a 85 kDa glycoprotein (ALS). Interacts with TMEM219. Phosphorylated by FAM20C in the extracellular medium.

It localises to the secreted. Its function is as follows. IGF-binding proteins prolong the half-life of the IGFs and have been shown to either inhibit or stimulate the growth promoting effects of the IGFs on cell culture. They alter the interaction of IGFs with their cell surface receptors. Also exhibits IGF-independent antiproliferative and apoptotic effects mediated by its receptor TMEM219/IGFBP-3R. Promotes testicular germ cell apoptosis. This chain is Insulin-like growth factor-binding protein 3 (Igfbp3), found in Mus musculus (Mouse).